The following is a 108-amino-acid chain: Thioredoxin (108 aa).

The region spanning 2–108 (NKIIELTDQN…LKDFLDENIK (107 aa)) is the Thioredoxin domain. Cys32 and Cys35 form a disulfide bridge.

Belongs to the thioredoxin family.

Participates in various redox reactions through the reversible oxidation of its active center dithiol to a disulfide and catalyzes dithiol-disulfide exchange reactions. The protein is Thioredoxin (trxA) of Buchnera aphidicola subsp. Schizaphis graminum (strain Sg).